The following is a 179-amino-acid chain: Large ribosomal subunit protein uL5 (179 aa).

It belongs to the universal ribosomal protein uL5 family. Part of the 50S ribosomal subunit; part of the 5S rRNA/L5/L18/L25 subcomplex. Contacts the 5S rRNA and the P site tRNA. Forms a bridge to the 30S subunit in the 70S ribosome.

Its function is as follows. This is one of the proteins that bind and probably mediate the attachment of the 5S RNA into the large ribosomal subunit, where it forms part of the central protuberance. In the 70S ribosome it contacts protein S13 of the 30S subunit (bridge B1b), connecting the 2 subunits; this bridge is implicated in subunit movement. Contacts the P site tRNA; the 5S rRNA and some of its associated proteins might help stabilize positioning of ribosome-bound tRNAs. The sequence is that of Large ribosomal subunit protein uL5 from Desulfitobacterium hafniense (strain Y51).